The primary structure comprises 129 residues: Glycine cleavage system H protein (129 aa).

One can recognise a Lipoyl-binding domain in the interval 24 to 106 (SYTVGITEHA…YGEGWFFRVM (83 aa)). Lysine 65 is modified (N6-lipoyllysine).

Belongs to the GcvH family. The glycine cleavage system is composed of four proteins: P, T, L and H. (R)-lipoate is required as a cofactor.

In terms of biological role, the glycine cleavage system catalyzes the degradation of glycine. The H protein shuttles the methylamine group of glycine from the P protein to the T protein. The protein is Glycine cleavage system H protein of Shewanella oneidensis (strain ATCC 700550 / JCM 31522 / CIP 106686 / LMG 19005 / NCIMB 14063 / MR-1).